The chain runs to 678 residues: Glycine--tRNA ligase beta subunit (678 aa).

Belongs to the class-II aminoacyl-tRNA synthetase family. In terms of assembly, tetramer of two alpha and two beta subunits.

It localises to the cytoplasm. The catalysed reaction is tRNA(Gly) + glycine + ATP = glycyl-tRNA(Gly) + AMP + diphosphate. The sequence is that of Glycine--tRNA ligase beta subunit from Streptococcus pneumoniae (strain P1031).